Here is a 511-residue protein sequence, read N- to C-terminus: Phosphoenolpyruvate carboxylase (511 aa).

It belongs to the PEPCase type 2 family. As to quaternary structure, homotetramer. It depends on Mg(2+) as a cofactor.

It catalyses the reaction oxaloacetate + phosphate = phosphoenolpyruvate + hydrogencarbonate. Its function is as follows. Catalyzes the irreversible beta-carboxylation of phosphoenolpyruvate (PEP) to form oxaloacetate (OAA), a four-carbon dicarboxylic acid source for the tricarboxylic acid cycle. The polypeptide is Phosphoenolpyruvate carboxylase (Saccharolobus islandicus (strain Y.N.15.51 / Yellowstone #2) (Sulfolobus islandicus)).